We begin with the raw amino-acid sequence, 1026 residues long: Multidrug resistance protein MdtC (1026 aa).

Helical transmembrane passes span 15 to 35 (ILIA…LPVA), 333 to 353 (EVEE…FLFL), 360 to 380 (LIPA…MYLC), 387 to 407 (LSLM…IVVL), 431 to 451 (VGFT…PLLL), 463 to 483 (FAVT…TLTP), 528 to 548 (LVGV…IAIP), 853 to 873 (LILI…LYES), 897 to 917 (LFNA…IGIV), 953 to 973 (PIMM…LSGG), and 984 to 1004 (ITIV…TPVV).

Belongs to the resistance-nodulation-cell division (RND) (TC 2.A.6) family. MdtC subfamily. Part of a tripartite efflux system composed of MdtA, MdtB and MdtC. MdtC forms a heteromultimer with MdtB.

Its subcellular location is the cell inner membrane. The polypeptide is Multidrug resistance protein MdtC (Salmonella paratyphi A (strain ATCC 9150 / SARB42)).